The chain runs to 210 residues: Syntaxin-binding protein 6 (210 aa).

N-acetylserine is present on Ser2. A v-SNARE coiled-coil homology domain is found at Gly151–Cys210.

In terms of assembly, part of a ternary complex containing SNAP25 and STX1A that can be dissociated by NAPA and NSF. Interacts with STX4A. In terms of tissue distribution, detected at low levels in brain, and at very low levels in heart, adrenal gland, testis, liver and kidney.

It is found in the cytoplasm. Its subcellular location is the membrane. Functionally, forms non-fusogenic complexes with SNAP25 and STX1A and may thereby modulate the formation of functional SNARE complexes and exocytosis. The protein is Syntaxin-binding protein 6 (STXBP6) of Homo sapiens (Human).